The chain runs to 131 residues: Large ribosomal subunit protein bL19 (131 aa).

Belongs to the bacterial ribosomal protein bL19 family.

This protein is located at the 30S-50S ribosomal subunit interface and may play a role in the structure and function of the aminoacyl-tRNA binding site. In Afipia carboxidovorans (strain ATCC 49405 / DSM 1227 / KCTC 32145 / OM5) (Oligotropha carboxidovorans), this protein is Large ribosomal subunit protein bL19.